A 554-amino-acid polypeptide reads, in one-letter code: MGDRRTISLPESDKILQYCSEIRMSPTSLLPSPSHSVANNLSGSVYTFCTEDNLEQCITYIDQELRTIGFPTVQAVSKNGEGRKLHLVSIINCIYELLQRNSQTMRSNEEVETQLLKINGDLEYLQSIHQRQKDQLEATKRENCALQERDRQMQCKNRNLLQLLKNEKEEVQKLQNIIASRSTQYNHSVKRKEREYNKLKERLYQLVMDKRDKKISIDVLNYVGRADGKRSSWRTGKTDAKNEEEMYKVLLNDYEQRQKQLMVENVELKKVLQQMKKEMISIVSQRKTKEKLEDSTGTVTSDIEEEIADSSKENLSELSCEAVREQLISSIRQQWRILKSHMEKLDNQACLVNVPTPDENGLIARAEHEQELDKLISEIQQCKETIRSQQQLLKQQLSVPRDDDTSKLLQDCYLLEDKERLQEEWKLFNAQKKNFEKERRNFTEAAIRLGHEKKVFEEDRAAWLKHQFLNMTVFSDHKNLEERKVPGVHFSSEQDNCRLHSRPHDKVLASSGDYSRRPSKALPITSSSKHSLTQIESISWRDSSISPNDTDFLN.

Coiled-coil stretches lie at residues 122 to 287 (LEYL…SQRK) and 359 to 449 (ENGL…AIRL). Positions 508–528 (LASSGDYSRRPSKALPITSSS) are disordered.

It belongs to the ADIP family. Interacts with WRAP73.

It localises to the cell junction. The protein localises to the adherens junction. Its subcellular location is the cytoplasm. It is found in the cytoskeleton. The protein resides in the microtubule organizing center. It localises to the centrosome. The protein localises to the centriolar satellite. In terms of biological role, belongs to an adhesion system, which plays a role in the organization of homotypic, interneuronal and heterotypic cell-cell adherens junctions (AJs). Involved in cell movement. Acts as a centrosome maturation factor, probably by maintaining the integrity of the pericentriolar material and proper microtubule nucleation at mitotic spindle poles. The function seems to implicate at least in part WRAP73; the SSX2IP:WRAP73 complex is proposed to act as regulator of spindle anchoring at the mitotic centrosome. The polypeptide is Afadin- and alpha-actinin-binding protein A (ssx2ip-a) (Xenopus laevis (African clawed frog)).